Here is a 344-residue protein sequence, read N- to C-terminus: Holliday junction branch migration complex subunit RuvB (344 aa).

Residues 1–183 (MLDERLISSH…FGISCRLDFY (183 aa)) are large ATPase domain (RuvB-L). ATP contacts are provided by residues Ile22, Arg23, Gly64, Lys67, Thr68, Thr69, 130–132 (EDY), Arg173, Tyr183, and Arg220. Residue Thr68 coordinates Mg(2+). The small ATPAse domain (RuvB-S) stretch occupies residues 184-254 (TPLELSEIIL…LAKWALEMLE (71 aa)). Positions 257–344 (ECGLDVMDRM…LEGKGLFSDA (88 aa)) are head domain (RuvB-H). DNA is bound by residues Lys312 and Arg317.

It belongs to the RuvB family. As to quaternary structure, homohexamer. Forms an RuvA(8)-RuvB(12)-Holliday junction (HJ) complex. HJ DNA is sandwiched between 2 RuvA tetramers; dsDNA enters through RuvA and exits via RuvB. An RuvB hexamer assembles on each DNA strand where it exits the tetramer. Each RuvB hexamer is contacted by two RuvA subunits (via domain III) on 2 adjacent RuvB subunits; this complex drives branch migration. In the full resolvosome a probable DNA-RuvA(4)-RuvB(12)-RuvC(2) complex forms which resolves the HJ.

The protein localises to the cytoplasm. It carries out the reaction ATP + H2O = ADP + phosphate + H(+). The RuvA-RuvB-RuvC complex processes Holliday junction (HJ) DNA during genetic recombination and DNA repair, while the RuvA-RuvB complex plays an important role in the rescue of blocked DNA replication forks via replication fork reversal (RFR). RuvA specifically binds to HJ cruciform DNA, conferring on it an open structure. The RuvB hexamer acts as an ATP-dependent pump, pulling dsDNA into and through the RuvAB complex. RuvB forms 2 homohexamers on either side of HJ DNA bound by 1 or 2 RuvA tetramers; 4 subunits per hexamer contact DNA at a time. Coordinated motions by a converter formed by DNA-disengaged RuvB subunits stimulates ATP hydrolysis and nucleotide exchange. Immobilization of the converter enables RuvB to convert the ATP-contained energy into a lever motion, pulling 2 nucleotides of DNA out of the RuvA tetramer per ATP hydrolyzed, thus driving DNA branch migration. The RuvB motors rotate together with the DNA substrate, which together with the progressing nucleotide cycle form the mechanistic basis for DNA recombination by continuous HJ branch migration. Branch migration allows RuvC to scan DNA until it finds its consensus sequence, where it cleaves and resolves cruciform DNA. In Syntrophomonas wolfei subsp. wolfei (strain DSM 2245B / Goettingen), this protein is Holliday junction branch migration complex subunit RuvB.